We begin with the raw amino-acid sequence, 279 residues long: Bifunctional protein FolD (279 aa).

NADP(+)-binding positions include 158 to 160, Ser183, and Ile224; that span reads GRS.

Belongs to the tetrahydrofolate dehydrogenase/cyclohydrolase family. As to quaternary structure, homodimer.

The enzyme catalyses (6R)-5,10-methylene-5,6,7,8-tetrahydrofolate + NADP(+) = (6R)-5,10-methenyltetrahydrofolate + NADPH. The catalysed reaction is (6R)-5,10-methenyltetrahydrofolate + H2O = (6R)-10-formyltetrahydrofolate + H(+). Its pathway is one-carbon metabolism; tetrahydrofolate interconversion. Its function is as follows. Catalyzes the oxidation of 5,10-methylenetetrahydrofolate to 5,10-methenyltetrahydrofolate and then the hydrolysis of 5,10-methenyltetrahydrofolate to 10-formyltetrahydrofolate. The sequence is that of Bifunctional protein FolD from Caldicellulosiruptor saccharolyticus (strain ATCC 43494 / DSM 8903 / Tp8T 6331).